Consider the following 280-residue polypeptide: Four and a half LIM domains protein 1 (280 aa).

An N-acetylserine modification is found at S2. An N6-acetyllysine modification is found at K4. The segment at 7 to 31 (CHYCRDPLQGKKYVQKDGRHCCLKC) adopts a C4-type zinc-finger fold. LIM zinc-binding domains follow at residues 40–92 (CVEC…CNKC), 101–153 (CKGC…CVTC), 162–212 (CVKC…CVDC), and 221–276 (CAGC…CPDC). K86 participates in a covalent cross-link: Glycyl lysine isopeptide (Lys-Gly) (interchain with G-Cter in SUMO2).

It is found in the cytoplasm. Functionally, may have an involvement in muscle development or hypertrophy. Isoform 2 binds to RBP-J and plays a negative regulatory role in the RBP-J-mediated transcription in mammalian systems. This chain is Four and a half LIM domains protein 1 (Fhl1), found in Rattus norvegicus (Rat).